A 151-amino-acid polypeptide reads, in one-letter code: Homeobox protein HD-1 (151 aa).

The segment at residues glutamate 87–glutamate 146 is a DNA-binding region (homeobox).

It is found in the nucleus. This Encephalitozoon cuniculi (strain GB-M1) (Microsporidian parasite) protein is Homeobox protein HD-1 (HD-1).